Here is a 91-residue protein sequence, read N- to C-terminus: Small ribosomal subunit protein uS19 (91 aa).

The protein belongs to the universal ribosomal protein uS19 family.

In terms of biological role, protein S19 forms a complex with S13 that binds strongly to the 16S ribosomal RNA. In Prochlorococcus marinus (strain SARG / CCMP1375 / SS120), this protein is Small ribosomal subunit protein uS19.